The chain runs to 116 residues: Staphylococcal complement inhibitor (116 aa).

Residues 1–31 (MKIRKSILAGTLAIVLASPLVTNLDKNEAQA) form the signal peptide. Residues 62–79 (LATGSLNTYYKRTIKISG) form an essential for activity region.

The protein belongs to the SCIN family.

The protein resides in the secreted. Functionally, involved in countering the first line of host defense mechanisms. Efficiently inhibits opsonization, phagocytosis and killing of S.aureus by human neutrophils. Acts by binding and stabilizing human C3 convertases (C4b2a and C3bBb), leading to their inactivation. The convertases are no longer able to cleave complement C3, therefore preventing further C3b deposition on the bacterial surface and phagocytosis of the bacterium. Also prevents C5a-induced neutrophil responses. This is Staphylococcal complement inhibitor (scn) from Staphylococcus aureus (strain Mu50 / ATCC 700699).